A 294-amino-acid chain; its full sequence is N-acetylmuramic acid 6-phosphate etherase (294 aa).

One can recognise an SIS domain in the interval 56–219 (TSYSLRNGGR…STLSMVSVGK (164 aa)). The Proton donor role is filled by Glu-84. Glu-115 is a catalytic residue.

Belongs to the GCKR-like family. MurNAc-6-P etherase subfamily. As to quaternary structure, homodimer.

The enzyme catalyses N-acetyl-D-muramate 6-phosphate + H2O = N-acetyl-D-glucosamine 6-phosphate + (R)-lactate. It functions in the pathway amino-sugar metabolism; 1,6-anhydro-N-acetylmuramate degradation. The protein operates within amino-sugar metabolism; N-acetylmuramate degradation. Its pathway is cell wall biogenesis; peptidoglycan recycling. Its function is as follows. Specifically catalyzes the cleavage of the D-lactyl ether substituent of MurNAc 6-phosphate, producing GlcNAc 6-phosphate and D-lactate. Together with AnmK, is also required for the utilization of anhydro-N-acetylmuramic acid (anhMurNAc) either imported from the medium or derived from its own cell wall murein, and thus plays a role in cell wall recycling. This is N-acetylmuramic acid 6-phosphate etherase from Francisella tularensis subsp. holarctica (strain LVS).